The primary structure comprises 209 residues: Uracil phosphoribosyltransferase (209 aa).

5-phospho-alpha-D-ribose 1-diphosphate-binding positions include R79, R104, and D131–S139. Residues I194 and G199–A201 contribute to the uracil site. D200 contacts 5-phospho-alpha-D-ribose 1-diphosphate.

The protein belongs to the UPRTase family. Mg(2+) serves as cofactor.

The enzyme catalyses UMP + diphosphate = 5-phospho-alpha-D-ribose 1-diphosphate + uracil. It functions in the pathway pyrimidine metabolism; UMP biosynthesis via salvage pathway; UMP from uracil: step 1/1. Allosterically activated by GTP. In terms of biological role, catalyzes the conversion of uracil and 5-phospho-alpha-D-ribose 1-diphosphate (PRPP) to UMP and diphosphate. This is Uracil phosphoribosyltransferase from Exiguobacterium sibiricum (strain DSM 17290 / CCUG 55495 / CIP 109462 / JCM 13490 / 255-15).